A 586-amino-acid chain; its full sequence is Acyl-coenzyme A synthetase ACSM3, mitochondrial (586 aa).

Residues 1-27 constitute a mitochondrion transit peptide; it reads MLACVTMKMLRHAKCFQRLAIFGSVRA. N6-succinyllysine is present on residues lysine 73 and lysine 106. Lysine 157 is subject to N6-acetyllysine. ATP-binding positions include 235 to 243, 374 to 379, aspartate 461, arginine 476, and lysine 572; these read TSGTSGYPK and EGYGQT.

The protein belongs to the ATP-dependent AMP-binding enzyme family. Mg(2+) serves as cofactor. Mn(2+) is required as a cofactor.

It localises to the mitochondrion. The protein resides in the mitochondrion matrix. It carries out the reaction a medium-chain fatty acid + ATP + CoA = a medium-chain fatty acyl-CoA + AMP + diphosphate. The enzyme catalyses propanoate + ATP + CoA = propanoyl-CoA + AMP + diphosphate. The catalysed reaction is butanoate + ATP + CoA = butanoyl-CoA + AMP + diphosphate. It catalyses the reaction 2-methylpropanoate + ATP + CoA = 2-methylpropanoyl-CoA + AMP + diphosphate. It carries out the reaction 2-methylbutanoate + ATP + CoA = 2-methylbutanoyl-CoA + AMP + diphosphate. The enzyme catalyses octanoate + ATP + CoA = octanoyl-CoA + AMP + diphosphate. In terms of biological role, catalyzes the activation of fatty acids by CoA to produce an acyl-CoA, the first step in fatty acid metabolism. Capable of activating medium-chain fatty acids with a preference for isobutyrate among fatty acids with 2-6 carbon atoms. This Pongo abelii (Sumatran orangutan) protein is Acyl-coenzyme A synthetase ACSM3, mitochondrial (ACSM3).